The chain runs to 574 residues: MDFEYVTGEEGLKKAIKRLENSPYLYLDTETTGDRIRLVQIGDEENTYVIDLYEIQDIEPLRKLINERGIVGHNLKFDLKYLYRYGIFPSATFDTMIASYLLGYERHSLNHIVSNLLGYSMDKSYQTSDWGASVLSDAQLKYAANDVIVLRELFPKMRDMLNELDAERGEELLKTRTAKIFDLKSPVAIVEMAFVREVAKLEINGFPVDVEELTNKLKAVERETQKRIQEFYIKYRVDPLSPKQLASLLTKKFKLNLPKTPKGNVSTDDKALTSYQDVEPVKLVLEIRKLKKIADKLKELKEHLKNGRVYPEFKQIGAVTGRMSSAHPNIQNIHRDMRGIFKAEEGNTFVISDFSQIELRIAAEYVKDPLMLDAFKKGKDMHRYTASVVLGKKEEEITKEERQLAKAINFGLIYGISAKGLAEYAKLGYGVEISLEEAQVLRERFFKNFKAFKEWHDRVKKELKEKGEVKGHTLLGRRFSANTFNDAVNYPIQGTGADLLKLAVLLFDANLQKKGIDAKLVNLVHDEIVVECEKEKAEEVKEILEKSMKTAGKIILKEVPVEVESVINERWTKD.

In terms of domain architecture, 3'-5' exonuclease spans 4–161; that stretch reads EYVTGEEGLK…ELFPKMRDML (158 aa).

The protein belongs to the DNA polymerase type-A family.

It catalyses the reaction DNA(n) + a 2'-deoxyribonucleoside 5'-triphosphate = DNA(n+1) + diphosphate. The protein is DNA polymerase I (polA) of Aquifex aeolicus (strain VF5).